The sequence spans 354 residues: Fructose-bisphosphate aldolase (354 aa).

Ser-50 lines the D-glyceraldehyde 3-phosphate pocket. Asp-83 acts as the Proton donor in catalysis. 4 residues coordinate Zn(2+): His-84, Asp-105, Glu-142, and His-198. Gly-199 contributes to the dihydroxyacetone phosphate binding site. A Zn(2+)-binding site is contributed by His-232. Residues 233–235 and 275–278 contribute to the dihydroxyacetone phosphate site; these read GSS and NIDT.

The protein belongs to the class II fructose-bisphosphate aldolase family. Requires Zn(2+) as cofactor.

The catalysed reaction is beta-D-fructose 1,6-bisphosphate = D-glyceraldehyde 3-phosphate + dihydroxyacetone phosphate. It functions in the pathway carbohydrate degradation; glycolysis; D-glyceraldehyde 3-phosphate and glycerone phosphate from D-glucose: step 4/4. Functionally, catalyzes the aldol condensation of dihydroxyacetone phosphate (DHAP or glycerone-phosphate) with glyceraldehyde 3-phosphate (G3P) to form fructose 1,6-bisphosphate (FBP) in gluconeogenesis and the reverse reaction in glycolysis. The protein is Fructose-bisphosphate aldolase (fba) of Pseudomonas aeruginosa (strain ATCC 15692 / DSM 22644 / CIP 104116 / JCM 14847 / LMG 12228 / 1C / PRS 101 / PAO1).